A 68-amino-acid chain; its full sequence is Large ribosomal subunit protein bL32 (68 aa).

The segment at Met-1 to Gly-25 is disordered.

It belongs to the bacterial ribosomal protein bL32 family.

This chain is Large ribosomal subunit protein bL32, found in Dinoroseobacter shibae (strain DSM 16493 / NCIMB 14021 / DFL 12).